The chain runs to 233 residues: Ribonuclease HII (233 aa).

The RNase H type-2 domain maps to 21–211; that stretch reads KVIAGVDEVG…LDALPQWRHL (191 aa). 3 residues coordinate a divalent metal cation: D27, E28, and D119.

This sequence belongs to the RNase HII family. Mn(2+) serves as cofactor. The cofactor is Mg(2+).

Its subcellular location is the cytoplasm. It catalyses the reaction Endonucleolytic cleavage to 5'-phosphomonoester.. Its function is as follows. Endonuclease that specifically degrades the RNA of RNA-DNA hybrids. The protein is Ribonuclease HII of Streptomyces avermitilis (strain ATCC 31267 / DSM 46492 / JCM 5070 / NBRC 14893 / NCIMB 12804 / NRRL 8165 / MA-4680).